The primary structure comprises 314 residues: Coiled-coil domain-containing protein 92 (314 aa).

2 coiled-coil regions span residues 1 to 27 (MAATNLENQLHSAQKNLLFLQREHAST) and 59 to 113 (DSSS…EKKY). Disordered stretches follow at residues 153 to 193 (LSSS…KKSL) and 251 to 314 (ASDR…DRTV). Over residues 176–186 (PPKDKLPETPR) the composition is skewed to basic and acidic residues. Ser-192 carries the post-translational modification Phosphoserine. The segment covering 266 to 280 (KPHKTHVGVAHRIHH) has biased composition (basic residues).

Interacts with CEP164. Phosphorylated at Ser-192 by TTBK2.

It localises to the cytoplasm. It is found in the cytoskeleton. Its subcellular location is the microtubule organizing center. The protein localises to the centrosome. The protein resides in the centriole. In terms of biological role, interferon-stimulated protein that plays a role in innate immunity. The protein is Coiled-coil domain-containing protein 92 (Ccdc92) of Mus musculus (Mouse).